Here is a 554-residue protein sequence, read N- to C-terminus: Protein SINE2 (554 aa).

Positions 17–290 (DKDPDSHKTA…MAAHETMRQA (274 aa)) are ARMADILLO-type fold. Disordered regions lie at residues 306 to 332 (CKPRNSLSGSVKSTSSLREHDGSVYSR), 411 to 442 (NESVCSRTNRSRSSRRNTKKRQSGDICSKHHR), and 465 to 487 (ETSSSSSIYDTSGTTTPTNTTED). The segment covering 311-321 (SLSGSVKSTSS) has biased composition (low complexity). The span at 322–332 (LREHDGSVYSR) shows a compositional bias: basic and acidic residues. Over residues 419-431 (NRSRSSRRNTKKR) the composition is skewed to basic residues. The span at 465–485 (ETSSSSSIYDTSGTTTPTNTT) shows a compositional bias: low complexity. The region spanning 509 to 554 (LDPRLGRSKGVLKLGLSVFSIAVAGFASFMWMYLQDDMMPPHLVPT) is the KASH domain. Residues 522 to 542 (LGLSVFSIAVAGFASFMWMYL) traverse the membrane as a helical segment. A Required for nuclear localization motif is present at residues 551–554 (LVPT).

Interacts with SUN1 and SUN2. In terms of tissue distribution, expressed in epidermal cells, mesophyll cells, trichomes and root cells.

Its subcellular location is the nucleus membrane. Plays a role in innate immunity against the oomycete pathogen A.arabidopsidis (Hpa). The protein is Protein SINE2 of Arabidopsis thaliana (Mouse-ear cress).